The sequence spans 146 residues: Large ribosomal subunit protein uL15 (146 aa).

Residues 1–13 (MKLNELHPSEGSR) show a composition bias toward basic and acidic residues. The tract at residues 1–56 (MKLNELHPSEGSRHARKRVGRGTSSGFGKTSGRGQKGQHARSGGNTRLGFEGGQMP) is disordered. Residues 23–35 (TSSGFGKTSGRGQ) show a composition bias toward gly residues.

The protein belongs to the universal ribosomal protein uL15 family. Part of the 50S ribosomal subunit.

Functionally, binds to the 23S rRNA. This chain is Large ribosomal subunit protein uL15, found in Lactobacillus delbrueckii subsp. bulgaricus (strain ATCC 11842 / DSM 20081 / BCRC 10696 / JCM 1002 / NBRC 13953 / NCIMB 11778 / NCTC 12712 / WDCM 00102 / Lb 14).